A 739-amino-acid chain; its full sequence is Probable beta-glucosidase L (739 aa).

The signal sequence occupies residues 1–17 (MQTLFLSLLAAAVTVHA). Asparagine 40 and asparagine 224 each carry an N-linked (GlcNAc...) asparagine glycan. Aspartate 252 is a catalytic residue. Asparagine 398 is a glycosylation site (N-linked (GlcNAc...) asparagine).

Belongs to the glycosyl hydrolase 3 family.

It is found in the secreted. The catalysed reaction is Hydrolysis of terminal, non-reducing beta-D-glucosyl residues with release of beta-D-glucose.. It functions in the pathway glycan metabolism; cellulose degradation. Functionally, beta-glucosidases are one of a number of cellulolytic enzymes involved in the degradation of cellulosic biomass. Catalyzes the last step releasing glucose from the inhibitory cellobiose. This Aspergillus fumigatus (strain CBS 144.89 / FGSC A1163 / CEA10) (Neosartorya fumigata) protein is Probable beta-glucosidase L (bglL).